The chain runs to 552 residues: CTP synthase (552 aa).

The segment at 1–271 (MASAASSKHL…DAFVVRRLGL (271 aa)) is amidoligase domain. Residue serine 18 coordinates CTP. Serine 18 is a binding site for UTP. ATP is bound by residues 19 to 24 (SLGKGL) and aspartate 76. Aspartate 76 and glutamate 145 together coordinate Mg(2+). CTP is bound by residues 152–154 (DIE), 192–197 (KTKPTQ), and lysine 228. Residues 192-197 (KTKPTQ) and lysine 228 each bind UTP. A Glutamine amidotransferase type-1 domain is found at 296–546 (TIALVGKYVD…IEAALKYSAG (251 aa)). L-glutamine is bound at residue glycine 359. Catalysis depends on cysteine 386, which acts as the Nucleophile; for glutamine hydrolysis. Residues 387–390 (LGLQ), glutamate 410, and arginine 472 each bind L-glutamine. Active-site residues include histidine 519 and glutamate 521.

It belongs to the CTP synthase family. In terms of assembly, homotetramer.

The enzyme catalyses UTP + L-glutamine + ATP + H2O = CTP + L-glutamate + ADP + phosphate + 2 H(+). The catalysed reaction is L-glutamine + H2O = L-glutamate + NH4(+). It catalyses the reaction UTP + NH4(+) + ATP = CTP + ADP + phosphate + 2 H(+). Its pathway is pyrimidine metabolism; CTP biosynthesis via de novo pathway; CTP from UDP: step 2/2. Allosterically activated by GTP, when glutamine is the substrate; GTP has no effect on the reaction when ammonia is the substrate. The allosteric effector GTP functions by stabilizing the protein conformation that binds the tetrahedral intermediate(s) formed during glutamine hydrolysis. Inhibited by the product CTP, via allosteric rather than competitive inhibition. In terms of biological role, catalyzes the ATP-dependent amination of UTP to CTP with either L-glutamine or ammonia as the source of nitrogen. Regulates intracellular CTP levels through interactions with the four ribonucleotide triphosphates. This is CTP synthase from Thermobifida fusca (strain YX).